A 1123-amino-acid polypeptide reads, in one-letter code: Ubiquitin carboxyl-terminal hydrolase 43 (1123 aa).

A disordered region spans residues 1–102; it reads MDLGPGDAAG…DGARPPGAQG (102 aa). Positions 17-28 are enriched in basic residues; that stretch reads RPRRRRSLRRLF. Positions 29–39 are enriched in low complexity; the sequence is SRFLLALGSRS. The region spanning 101–710 is the USP domain; it reads QGLKNHGNTC…GAYILFYQKR (610 aa). Cysteine 110 functions as the Nucleophile in the catalytic mechanism. The tract at residues 202–221 is disordered; sequence EGSSRGPVSEKLPPEATKTS. Catalysis depends on histidine 668, which acts as the Proton acceptor. Asymmetric dimethylarginine is present on arginine 746. 4 disordered regions span residues 795–826, 854–886, 959–1049, and 1068–1099; these read ISMKAPTTSRAKQGPFKTMPLRWSFGSKEKPP, TGTAGEDEKSASPRSNVALPANSEDGGRAIERG, FQMG…RIPE, and SSLRLPRKASRAPRGSALGMSQRTVPGEQASY. Serine 969 carries the phosphoserine modification. Positions 979–990 are enriched in basic and acidic residues; sequence KDSRRGTSELDR. Low complexity predominate over residues 1016–1027; that stretch reads VSPQVPPVSLVS. Serine 1041 is modified (phosphoserine).

The protein belongs to the peptidase C19 family. Expressed in brain, aorta and lung at low levels.

It catalyses the reaction Thiol-dependent hydrolysis of ester, thioester, amide, peptide and isopeptide bonds formed by the C-terminal Gly of ubiquitin (a 76-residue protein attached to proteins as an intracellular targeting signal).. In terms of biological role, may recognize and hydrolyze the peptide bond at the C-terminal Gly of ubiquitin. Involved in the processing of poly-ubiquitin precursors as well as that of ubiquitinated proteins. The polypeptide is Ubiquitin carboxyl-terminal hydrolase 43 (USP43) (Homo sapiens (Human)).